Reading from the N-terminus, the 147-residue chain is 3-dehydroquinate dehydratase (147 aa).

Y23 (proton acceptor) is an active-site residue. Residues N75, H81, and D88 each coordinate substrate. The active-site Proton donor is the H101. Substrate contacts are provided by residues 102–103 (LS) and R112.

The protein belongs to the type-II 3-dehydroquinase family. In terms of assembly, homododecamer.

The enzyme catalyses 3-dehydroquinate = 3-dehydroshikimate + H2O. The protein operates within metabolic intermediate biosynthesis; chorismate biosynthesis; chorismate from D-erythrose 4-phosphate and phosphoenolpyruvate: step 3/7. In terms of biological role, catalyzes a trans-dehydration via an enolate intermediate. This Stutzerimonas stutzeri (strain A1501) (Pseudomonas stutzeri) protein is 3-dehydroquinate dehydratase.